An 832-amino-acid polypeptide reads, in one-letter code: Elongation factor 2 (832 aa).

The tr-type G domain occupies 17–336 (HNIRNMSVIA…MIVTHLPSPA (320 aa)). 26-33 (AHVDHGKS) serves as a coordination point for GTP. A phosphothreonine mark is found at Thr-57 and Thr-59. GTP-binding positions include 152 to 155 (NKVD) and 207 to 209 (SGL). The interval 580 to 608 (AEPLPDGLTDDIEEGKVSPRDDPKERSNL) is disordered. A compositionally biased stretch (basic and acidic residues) spans 593 to 608 (EGKVSPRDDPKERSNL). Residue His-689 is modified to Diphthamide.

Belongs to the TRAFAC class translation factor GTPase superfamily. Classic translation factor GTPase family. EF-G/EF-2 subfamily.

The protein localises to the cytoplasm. The catalysed reaction is GTP + H2O = GDP + phosphate + H(+). In terms of biological role, catalyzes the GTP-dependent ribosomal translocation step during translation elongation. During this step, the ribosome changes from the pre-translocational (PRE) to the post-translocational (POST) state as the newly formed A-site-bound peptidyl-tRNA and P-site-bound deacylated tRNA move to the P and E sites, respectively. Catalyzes the coordinated movement of the two tRNA molecules, the mRNA and conformational changes in the ribosome. The sequence is that of Elongation factor 2 from Cryptosporidium parvum.